Here is a 366-residue protein sequence, read N- to C-terminus: GTP cyclohydrolase 1 type 2 homolog (366 aa).

Residues His64, His65, Asp102, His326, and Glu329 each contribute to the Zn(2+) site.

Belongs to the GTP cyclohydrolase I type 2/NIF3 family. In terms of assembly, homohexamer.

This is GTP cyclohydrolase 1 type 2 homolog from Staphylococcus aureus (strain MRSA252).